A 461-amino-acid chain; its full sequence is UPF0210 protein Ddes_0622 (461 aa).

The protein belongs to the UPF0210 family. Homodimer.

This chain is UPF0210 protein Ddes_0622, found in Desulfovibrio desulfuricans (strain ATCC 27774 / DSM 6949 / MB).